A 329-amino-acid chain; its full sequence is Prostaglandin reductase 1 (329 aa).

Position 18 is a phosphothreonine (Thr18). Ser20 is modified (phosphoserine). NADP(+)-binding positions include 152 to 155 (GAVG), Lys178, Tyr193, Asn217, 239 to 245 (CGAISVY), 270 to 272 (FIV), and Asn321. Lys178 is subject to N6-(2-hydroxyisobutyryl)lysine; alternate. Residue Lys178 is modified to N6-acetyllysine; alternate.

Belongs to the NADP-dependent oxidoreductase L4BD family. As to quaternary structure, monomer or homodimer. Detected in small intestine, kidney, liver, spleen and stomach (at protein level). Detected in small intestine, kidney and liver.

The protein localises to the cytoplasm. The catalysed reaction is 13,14-dihydro-15-oxo-prostaglandin E1 + NADP(+) = 15-oxoprostaglandin E1 + NADPH + H(+). The enzyme catalyses 13,14-dihydro-15-oxo-prostaglandin E2 + NAD(+) = 15-oxoprostaglandin E2 + NADH + H(+). It carries out the reaction 13,14-dihydro-15-oxo-prostaglandin F1alpha + NADP(+) = 15-oxoprostaglandin F1alpha + NADPH + H(+). It catalyses the reaction 13,14-dihydro-15-oxo-PGF2alpha + NADP(+) = 15-oxoprostaglandin F2alpha + NADPH + H(+). The catalysed reaction is leukotriene B4 + NADP(+) = 12-oxo-leukotriene B4 + NADPH + H(+). The enzyme catalyses 20-hydroxy-leukotriene B4 + NADP(+) = 12-oxo-20-hydroxy-leukotriene B4 + NADPH + H(+). It carries out the reaction 6-trans-leukotriene B4 + NADP(+) = 12-oxo-(5S)-hydroxy-(6E,8E,10E,14Z)-eicosatetraenoate + NADPH + H(+). It catalyses the reaction (5S,12S)-dihydroxy-(6E,10E,12E,14Z)-eicosatetraenoate + NADP(+) = 12-oxo-(5S)-hydroxy-(6E,8E,10E,14Z)-eicosatetraenoate + NADPH + H(+). The catalysed reaction is an n-alkanal + NADP(+) = an alk-2-enal + NADPH + H(+). The enzyme catalyses hexanal + NADP(+) = (E)-hex-2-enal + NADPH + H(+). It carries out the reaction octanal + NADP(+) = (2E)-octenal + NADPH + H(+). It catalyses the reaction decanal + NADP(+) = (2E)-decenal + NADPH + H(+). The catalysed reaction is dodecanal + NADP(+) = (2E)-dodecenal + NADPH + H(+). The enzyme catalyses 4-hydroxynonanal + NADP(+) = (E)-4-hydroxynon-2-enal + NADPH + H(+). It carries out the reaction pentan-2-one + NADP(+) = (E)-pent-3-en-2-one + NADPH + H(+). It catalyses the reaction nonan-2-one + NADP(+) = (3E)-nonen-2-one + NADPH + H(+). Its function is as follows. NAD(P)H-dependent oxidoreductase involved in metabolic inactivation of pro- and anti-inflammatory eicosanoids: prostaglandins (PG), leukotrienes (LT) and lipoxins (LX). Catalyzes with high efficiency the reduction of the 13,14 double bond of 15-oxoPGs, including 15-oxo-PGE1, 15-oxo-PGE2, 15-oxo-PGF1-alpha and 15-oxo-PGF2-alpha. Catalyzes with lower efficiency the oxidation of the hydroxyl group at C12 of LTB4 and its derivatives, converting them into biologically less active 12-oxo-LTB4 metabolites. Reduces 15-oxo-LXA4 to 13,14 dihydro-15-oxo-LXA4, enhancing neutrophil recruitment at the inflammatory site. Plays a role in metabolic detoxification of alkenals and ketones. Reduces alpha,beta-unsaturated alkenals and ketones, particularly those with medium-chain length, showing highest affinity toward (2E)-decenal and (3E)-3-nonen-2-one. May inactivate 4-hydroxy-2-nonenal, a cytotoxic lipid constituent of oxidized low-density lipoprotein particles. The polypeptide is Prostaglandin reductase 1 (Ptgr1) (Cavia porcellus (Guinea pig)).